The following is a 511-amino-acid chain: ATP synthase subunit alpha (511 aa).

169-176 (GDRQTGKT) provides a ligand contact to ATP.

Belongs to the ATPase alpha/beta chains family. As to quaternary structure, F-type ATPases have 2 components, CF(1) - the catalytic core - and CF(0) - the membrane proton channel. CF(1) has five subunits: alpha(3), beta(3), gamma(1), delta(1), epsilon(1). CF(0) has three main subunits: a(1), b(2) and c(9-12). The alpha and beta chains form an alternating ring which encloses part of the gamma chain. CF(1) is attached to CF(0) by a central stalk formed by the gamma and epsilon chains, while a peripheral stalk is formed by the delta and b chains.

The protein resides in the cell inner membrane. It catalyses the reaction ATP + H2O + 4 H(+)(in) = ADP + phosphate + 5 H(+)(out). Functionally, produces ATP from ADP in the presence of a proton gradient across the membrane. The alpha chain is a regulatory subunit. The chain is ATP synthase subunit alpha from Paracoccus denitrificans (strain Pd 1222).